The following is a 268-amino-acid chain: Orotidine 5'-phosphate decarboxylase (268 aa).

Substrate is bound by residues D38, 60-62, 92-101, Y218, and R236; these read KTH and DRKFADIGNT. Residue K94 is the Proton donor of the active site.

The protein belongs to the OMP decarboxylase family.

It carries out the reaction orotidine 5'-phosphate + H(+) = UMP + CO2. The protein operates within pyrimidine metabolism; UMP biosynthesis via de novo pathway; UMP from orotate: step 2/2. The sequence is that of Orotidine 5'-phosphate decarboxylase (URA3) from Candida tropicalis (Yeast).